Consider the following 344-residue polypeptide: Phenylalanine--tRNA ligase alpha subunit (344 aa).

Residue glutamate 261 participates in Mg(2+) binding.

This sequence belongs to the class-II aminoacyl-tRNA synthetase family. Phe-tRNA synthetase alpha subunit type 1 subfamily. As to quaternary structure, tetramer of two alpha and two beta subunits. Mg(2+) serves as cofactor.

The protein resides in the cytoplasm. It carries out the reaction tRNA(Phe) + L-phenylalanine + ATP = L-phenylalanyl-tRNA(Phe) + AMP + diphosphate + H(+). The sequence is that of Phenylalanine--tRNA ligase alpha subunit from Ehrlichia ruminantium (strain Gardel).